The sequence spans 125 residues: Lymphocyte antigen 6 complex locus protein G6c (125 aa).

The signal sequence occupies residues 1–18 (MKALMLLTLSVLLCWVSA). In terms of domain architecture, UPAR/Ly6 spans 20 to 111 (IRCHSCYKVP…PRPTPALGLV (92 aa)). Disulfide bonds link Cys-22–Cys-47, Cys-25–Cys-33, and Cys-39–Cys-65. Residue Asn-88 is glycosylated (N-linked (GlcNAc...) asparagine). Cys-92 and Cys-97 form a disulfide bridge. Ser-99 is lipidated: GPI-anchor amidated serine. Positions 100–125 (AGPRPTPALGLVFLTSLAGLGLWLLH) are cleaved as a propeptide — removed in mature form.

In terms of assembly, monomer. Post-translationally, N-glycosylated. In terms of tissue distribution, highly expressed at the leading edges of cells, on filopodia.

It is found in the cell membrane. In Homo sapiens (Human), this protein is Lymphocyte antigen 6 complex locus protein G6c (LY6G6C).